Here is a 115-residue protein sequence, read N- to C-terminus: Large ribosomal subunit protein bL20 (115 aa).

Belongs to the bacterial ribosomal protein bL20 family.

Its function is as follows. Binds directly to 23S ribosomal RNA and is necessary for the in vitro assembly process of the 50S ribosomal subunit. It is not involved in the protein synthesizing functions of that subunit. This Prochlorococcus marinus (strain SARG / CCMP1375 / SS120) protein is Large ribosomal subunit protein bL20.